Consider the following 398-residue polypeptide: Alpha-(1,3)-fucosyltransferase 4 (398 aa).

The Cytoplasmic portion of the chain corresponds to 1 to 15 (MRARWGRRGARRGGP). The chain crosses the membrane as a helical; Signal-anchor for type II membrane protein span at residues 16-40 (GLPGTHLALLAASLLSSSVAIYVCW). Residues 41–398 (KQLPPLPWAS…VPNLAGWFQQ (358 aa)) lie on the Lumenal side of the membrane. N-linked (GlcNAc...) asparagine glycosylation is found at N84, N183, and N311.

Belongs to the glycosyltransferase 10 family.

The protein localises to the golgi apparatus. Its subcellular location is the golgi stack membrane. The enzyme catalyses a beta-D-galactosyl-(1-&gt;4)-N-acetyl-beta-D-glucosaminyl derivative + GDP-beta-L-fucose = a beta-D-galactosyl-(1-&gt;4)-[alpha-L-fucosyl-(1-&gt;3)]-N-acetyl-beta-D-glucosaminyl derivative + GDP + H(+). It carries out the reaction an N-acetyl-alpha-neuraminyl-(2-&gt;3)-beta-D-galactosyl-(1-&gt;4)-N-acetyl-beta-D-glucosaminyl derivative + GDP-beta-L-fucose = an alpha-Neu5Ac-(2-&gt;3)-beta-D-Gal-(1-&gt;4)-[alpha-L-Fuc-(1-&gt;3)]-beta-D-GlcNAc derivative + GDP + H(+). It catalyses the reaction an alpha-Neu5Ac-(2-&gt;3)-beta-D-Gal-(1-&gt;4)-beta-D-GlcNAc-(1-&gt;3)-beta-D-Gal-(1-&gt;4)-beta-D-GlcNAc derivative + GDP-beta-L-fucose = an alpha-Neu5Ac-(2-&gt;3)-beta-D-Gal-(1-&gt;4)-beta-D-GlcNAc-(1-&gt;3)-beta-D-Gal-(1-&gt;4)-[alpha-L-Fuc-(1-&gt;3)]-beta-D-GlcNAc derivative + GDP + H(+). The catalysed reaction is an alpha-Neu5Ac-(2-&gt;3)-beta-D-Gal-(1-&gt;4)-beta-D-GlcNAc6S derivative + GDP-beta-L-fucose = an alpha-Neu5Ac-(2-&gt;3)-beta-D-Gal-(1-&gt;4)-[alpha-L-Fuc-(1-&gt;3)]-beta-D-GlcNAc6S derivative + GDP + H(+). It participates in protein modification; protein glycosylation. Functionally, catalyzes alpha(1-&gt;3) linkage of fucosyl moiety transferred from GDP-beta-L-fucose to N-acetyl glucosamine (GlcNAc) within type 2 lactosamine (LacNAc, Gal-beta(1-&gt;4)GlcNAc) glycan attached to N- or O-linked glycoproteins. Robustly fucosylates nonsialylated distal LacNAc unit of the polylactosamine chain to form Lewis X antigen (CD15), a glycan determinant known to mediate important cellular functions in development and immunity. Fucosylates with lower efficiency sialylated LacNAc acceptors to form sialyl Lewis X and 6-sulfo sialyl Lewis X determinants that serve as recognition epitopes for C-type lectins. Together with FUT7 contributes to SELE, SELL and SELP selectin ligand biosynthesis and selectin-dependent lymphocyte homing, leukocyte migration and blood leukocyte homeostasis. In a cell type specific manner, may also fucosylate the internal LacNAc unit of the polylactosamine chain to form VIM-2 antigen that serves as recognition epitope for SELE. The polypeptide is Alpha-(1,3)-fucosyltransferase 4 (FUT4) (Bos taurus (Bovine)).